Reading from the N-terminus, the 128-residue chain is MARVKRSVNAKKKRREILKSAKGYRGQRSRLYRKAKEQWLHSMTYAYRDRRARKGEFRKLWIQRINAAARMNGITYNRLIQGLRLAEIEVDRKILADLAVNDFAAFSAICEAAKAALPEDVNAPKAAA.

This sequence belongs to the bacterial ribosomal protein bL20 family.

In terms of biological role, binds directly to 23S ribosomal RNA and is necessary for the in vitro assembly process of the 50S ribosomal subunit. It is not involved in the protein synthesizing functions of that subunit. In Corynebacterium efficiens (strain DSM 44549 / YS-314 / AJ 12310 / JCM 11189 / NBRC 100395), this protein is Large ribosomal subunit protein bL20.